We begin with the raw amino-acid sequence, 891 residues long: MDVEFTPSDTNKFEANITKQHQVIELNNQEEQQQPEQQEQPEQQEELKDNNEKIKTSEDSTTTTTTTATITTTGENSISITVTEANNNTNQLNKSTSSSSSLNNNKNEDNKSVTASIAPSSPVIESSAIESAIDSPYISSASVFSNATNNNNNTTTTNVVVPPPQLLESSTENITSAAEITPVTTTTTEETINIPKESIEVQKQLAETTTTAAITTTNSTQVTSTTVTNPDKLKCKMHRSNFIMTQIGGKKFTEMTLEQLLDEDDPQTGMGFKNPGPQGFLEYVGDTAPPPTPPPISTSNTTGKNTGKNSTTGKSEGKKATSNSSNVPPSPVLASSASPSPKLKSSSSSIRNSGAISGTSENGGGGNGSGTISKNTAPTTGNSTTTTTTTTSTTTSSSKDRKSVVQKQSTLGRLQKNEEERRKRKEQKRSRAREKPILIAGIEDLPAECLKMVKKSKIPEDKLIQHLNILLPILRFRTGYNLRHVPIVSSNNSTNSLGSSINKNNSNNTTTTTTTTNTNNKSPEVSTNSLDVNIINQNQNQTNSVQNNQINTSSNVITTNVIPTTTASQSSQAPYHPSHNGNEEDDYDDGSRLENAILPKGTVDLIETDRDVKKLYKNLKQIGSGGFGSVFLAKSTVDKCEIAIKKIAHVSAKAQRTNLNEIGFLNFCKHPNIVSYLRSHLVDDTIWIAMEYMQGGTLTEASQGHTFNESCIAYVAKGMLEGLMYLHAHNIVHRDIKSGNIMMTIDGKIKIVDFGLCVDANERKLVHMAGSPFWMSPEMIRGESYGCPTDIWSFAICLLELANGEPPHRKSSLTAMFTTATEGCAGLDKPERWTEHFTHFLNLCLEMDPSKRSTAEQLLKHPWINLSENPETMKKILAQIFIANVMNHLDN.

Disordered regions lie at residues 24–70 (IELN…TATI), 85–121 (ANNN…APSS), 264–435 (DDPQ…AREK), 495–526 (NSLG…PEVS), and 565–588 (TTAS…DDYD). A compositionally biased stretch (low complexity) spans 29 to 41 (QEEQQQPEQQEQP). A compositionally biased stretch (basic and acidic residues) spans 45–58 (EELKDNNEKIKTSE). Low complexity-rich tracts occupy residues 61-70 (TTTTTTTATI), 86-105 (NNNT…LNNN), 297-314 (STSN…TTGK), 322-360 (SNSS…SGTS), and 379-397 (TTGN…TTSS). Basic residues predominate over residues 422-432 (RKRKEQKRSRA). The span at 495–522 (NSLGSSINKNNSNNTTTTTTTTNTNNKS) shows a compositional bias: low complexity. In terms of domain architecture, Protein kinase spans 616–864 (YKNLKQIGSG…AEQLLKHPWI (249 aa)). Residues 622-630 (IGSGGFGSV) and K645 contribute to the ATP site. Catalysis depends on D735, which acts as the Proton acceptor.

Belongs to the protein kinase superfamily. STE Ser/Thr protein kinase family. STE20 subfamily. It depends on Mg(2+) as a cofactor.

It carries out the reaction L-seryl-[protein] + ATP = O-phospho-L-seryl-[protein] + ADP + H(+). It catalyses the reaction L-threonyl-[protein] + ATP = O-phospho-L-threonyl-[protein] + ADP + H(+). The polypeptide is Probable serine/threonine-protein kinase mkcC (Dictyostelium discoideum (Social amoeba)).